Consider the following 428-residue polypeptide: Divergent protein kinase domain 1A (428 aa).

Residues methionine 1 to lysine 27 are Cytoplasmic-facing. The chain crosses the membrane as a helical span at residues tyrosine 28 to serine 48. Topologically, residues threonine 49 to serine 428 are lumenal.

It belongs to the DIPK family. Among the many cysteines in the lumenal domain, most are probably involved in disulfide bonds.

It localises to the endoplasmic reticulum membrane. The sequence is that of Divergent protein kinase domain 1A (dipk1a) from Danio rerio (Zebrafish).